A 343-amino-acid chain; its full sequence is MHNKINLLKEKFEHDLAKNKNSLENLIYLEQKFLGKKSFLQELNQTLKNIPSEKKPAIGKLINEFKKTIILSLQKEKQYLKTQKMNLELMQESVDVNLPGFNFSTGSIHPLYQIIEQLEDLFLSLGYEIKDGNEIESDFYNFEMLNIGKNHPARAMQDSFYINPQKLLRTHTSNIQVKEMLANEGKPLKIISSGKVFRKDNDDATHSHQFMQLEGLVIDQKINFLNLKETILTIIKELFGDSQEINIRPSYFPFTEPSIEVDLVIRKKDNSKEYLEILGAGLVHPQVLLNANYNPEKYQGFAFGIGIERIAMIKYQIENIRHFYQNDIRFLKQFSKKVKHENS.

A Mg(2+)-binding site is contributed by Glu256.

Belongs to the class-II aminoacyl-tRNA synthetase family. Phe-tRNA synthetase alpha subunit type 1 subfamily. In terms of assembly, tetramer of two alpha and two beta subunits. Mg(2+) is required as a cofactor.

The protein resides in the cytoplasm. The catalysed reaction is tRNA(Phe) + L-phenylalanine + ATP = L-phenylalanyl-tRNA(Phe) + AMP + diphosphate + H(+). In Phytoplasma australiense, this protein is Phenylalanine--tRNA ligase alpha subunit.